Consider the following 305-residue polypeptide: Translation initiation factor eIF2B subunit alpha (305 aa).

Ser-2 carries the N-acetylserine modification. The residue at position 291 (Thr-291) is a Phosphothreonine.

Belongs to the eIF-2B alpha/beta/delta subunits family. Component of the translation initiation factor 2B (eIF2B) complex which is a heterodecamer of two sets of five different subunits: alpha, beta, gamma, delta and epsilon. Subunits alpha, beta and delta comprise a regulatory subcomplex and subunits epsilon and gamma comprise a catalytic subcomplex. Within the complex, the hexameric regulatory complex resides at the center, with the two heterodimeric catalytic subcomplexes bound on opposite sides.

Its subcellular location is the cytoplasm. It is found in the cytosol. Acts as a component of the translation initiation factor 2B (eIF2B) complex, which catalyzes the exchange of GDP for GTP on the eukaryotic initiation factor 2 (eIF2) complex gamma subunit. Its guanine nucleotide exchange factor activity is repressed when bound to eIF2 complex phosphorylated on the alpha subunit, thereby limiting the amount of methionyl-initiator methionine tRNA available to the ribosome and consequently global translation is repressed. It activates the translation of GCN4 in response to low amino acid, carbon, or purine availability, by suppressing the inhibitory effects of multiple uORFs present in the leader of GCN4 mRNA. It may promote either repression or activation of GCN4 expression depending on amino acid availability. Modulation of GCN3 regulatory function in response to amino acid availability occurs post-translationally. This Saccharomyces cerevisiae (strain ATCC 204508 / S288c) (Baker's yeast) protein is Translation initiation factor eIF2B subunit alpha.